We begin with the raw amino-acid sequence, 111 residues long: uncharacterized protein (111 aa).

This is an uncharacterized protein from Streptomyces coelicolor (strain ATCC BAA-471 / A3(2) / M145).